Here is a 380-residue protein sequence, read N- to C-terminus: Tetraacyldisaccharide 4'-kinase (380 aa).

51-58 (SVGGTGKT) contributes to the ATP binding site.

The protein belongs to the LpxK family.

It carries out the reaction a lipid A disaccharide + ATP = a lipid IVA + ADP + H(+). It functions in the pathway glycolipid biosynthesis; lipid IV(A) biosynthesis; lipid IV(A) from (3R)-3-hydroxytetradecanoyl-[acyl-carrier-protein] and UDP-N-acetyl-alpha-D-glucosamine: step 6/6. Functionally, transfers the gamma-phosphate of ATP to the 4'-position of a tetraacyldisaccharide 1-phosphate intermediate (termed DS-1-P) to form tetraacyldisaccharide 1,4'-bis-phosphate (lipid IVA). The protein is Tetraacyldisaccharide 4'-kinase of Bacteroides thetaiotaomicron (strain ATCC 29148 / DSM 2079 / JCM 5827 / CCUG 10774 / NCTC 10582 / VPI-5482 / E50).